We begin with the raw amino-acid sequence, 80 residues long: Sulfur carrier protein TusA (80 aa).

Cys17 serves as the catalytic Cysteine persulfide intermediate.

This sequence belongs to the sulfur carrier protein TusA family.

The protein resides in the cytoplasm. Its function is as follows. Sulfur carrier protein which probably makes part of a sulfur-relay system. The protein is Sulfur carrier protein TusA of Pseudomonas putida (strain GB-1).